We begin with the raw amino-acid sequence, 206 residues long: Nucleoside triphosphate pyrophosphatase (206 aa).

The Proton acceptor role is filled by aspartate 76.

It belongs to the Maf family. A divalent metal cation serves as cofactor.

The protein localises to the cytoplasm. It catalyses the reaction a ribonucleoside 5'-triphosphate + H2O = a ribonucleoside 5'-phosphate + diphosphate + H(+). The enzyme catalyses a 2'-deoxyribonucleoside 5'-triphosphate + H2O = a 2'-deoxyribonucleoside 5'-phosphate + diphosphate + H(+). Its function is as follows. Nucleoside triphosphate pyrophosphatase. May have a dual role in cell division arrest and in preventing the incorporation of modified nucleotides into cellular nucleic acids. The sequence is that of Nucleoside triphosphate pyrophosphatase from Streptomyces avermitilis (strain ATCC 31267 / DSM 46492 / JCM 5070 / NBRC 14893 / NCIMB 12804 / NRRL 8165 / MA-4680).